A 47-amino-acid chain; its full sequence is MPRLTAKDFPQELLDYYDYYAHGKISKREFLNLAAKCGRRDDGISVV.

The polypeptide is Protein YqhI (Escherichia coli (strain K12)).